We begin with the raw amino-acid sequence, 413 residues long: MRSPRVLGLVLAGGAGKRLAPLTADRAKPAVPFGGIYRLVDFVLSNLVNGGYLRIAVLTQYKSHSLDRHITTTWRMSNLLGNYVTPVPAQQRLGPQWFAGSADAIHQSLNLVHDEAPDVVVVFGADHVYRMDPRQMVAQHLETGAGVTVAGLRVPRSEGSAFGVIRTADDGVTIAEFLEKPADPPGLPGSPDEIFASMGNYVFTTDVLIDALRADAADPESVHDMGGSIVPMLVEQGTAAVYDFAANQVPGALERDHGYWRDVGTLDSYFDAHMDLCALDPVFNLYNRDWPIYTNVPPSVPPAKFVHDTPGRVGVATDSIVSNGVIISGGAVRRSVLSPGVRVNSWSVVENAVVMDNSVIGRRAVVRDAILDKNVVVPPGATVGVDKEHDRARGYQVSEAGVTVVGKGVTIAD.

Residues Gly163, 179–180 (EK), and Ser197 each bind alpha-D-glucose 1-phosphate.

The protein belongs to the bacterial/plant glucose-1-phosphate adenylyltransferase family. Homotetramer.

It catalyses the reaction alpha-D-glucose 1-phosphate + ATP + H(+) = ADP-alpha-D-glucose + diphosphate. It participates in glycan biosynthesis; glycogen biosynthesis. Functionally, involved in the biosynthesis of ADP-glucose, a building block required for the elongation reactions to produce glycogen. Catalyzes the reaction between ATP and alpha-D-glucose 1-phosphate (G1P) to produce pyrophosphate and ADP-Glc. This Parafrankia sp. (strain EAN1pec) protein is Glucose-1-phosphate adenylyltransferase.